Reading from the N-terminus, the 550-residue chain is Methionine--tRNA ligase (550 aa).

The 'HIGH' region motif lies at 10-22 (LPYPNNSSPHLGN). Positions 336–340 (KFSKS) match the 'KMSKS' region motif. Lysine 339 lines the ATP pocket.

This sequence belongs to the class-I aminoacyl-tRNA synthetase family.

The catalysed reaction is tRNA(Met) + L-methionine + ATP = L-methionyl-tRNA(Met) + AMP + diphosphate. The chain is Methionine--tRNA ligase (MARS) from Acanthamoeba polyphaga mimivirus (APMV).